The sequence spans 265 residues: Type III pantothenate kinase (265 aa).

6–13 lines the ATP pocket; the sequence is DVGNTNIV. Substrate is bound at residue 112 to 115; sequence GADR. The Proton acceptor role is filled by aspartate 114. Aspartate 134 provides a ligand contact to K(+). Residue threonine 137 coordinates ATP. Threonine 189 lines the substrate pocket.

It belongs to the type III pantothenate kinase family. In terms of assembly, homodimer. NH4(+) serves as cofactor. The cofactor is K(+).

It is found in the cytoplasm. The enzyme catalyses (R)-pantothenate + ATP = (R)-4'-phosphopantothenate + ADP + H(+). The protein operates within cofactor biosynthesis; coenzyme A biosynthesis; CoA from (R)-pantothenate: step 1/5. Catalyzes the phosphorylation of pantothenate (Pan), the first step in CoA biosynthesis. This is Type III pantothenate kinase from Saccharopolyspora erythraea (strain ATCC 11635 / DSM 40517 / JCM 4748 / NBRC 13426 / NCIMB 8594 / NRRL 2338).